The following is a 480-amino-acid chain: NADH-quinone oxidoreductase subunit N (480 aa).

14 helical membrane passes run 11–31 (LLPELVATGFLLVVLLGGVFA), 38–58 (LVAALAGLGTLASFAAAAGLL), 76–96 (FALYFKLIITATAFFTVIAAA), 105–125 (APEYMTLIIAVALGGMLLVSM), 128–148 (LFGVFLAVELATIPSYAMVAF), 163–183 (LITGVIASSFLLYGIVLIYGV), 195–215 (AFGEGLSPVAIVGLVLMISGL), 240–260 (AAFLSVAPKAAIFAALLRILL), 270–290 (WTALMAVIAIVTMFVGNLLAL), 298–318 (MLAYSSVAHSGYILAAFAALQ), 329–349 (VMIYSAAYAVMNLGAFLTIDL), 368–388 (AAAMAVFMAALVGIPPLSGFF), 407–427 (VAVAALVVNSVLSVPYYFGII), and 453–473 (VYAMALLTALFFLGVGPLAAL).

Belongs to the complex I subunit 2 family. As to quaternary structure, NDH-1 is composed of 14 different subunits. Subunits NuoA, H, J, K, L, M, N constitute the membrane sector of the complex.

Its subcellular location is the cell membrane. It catalyses the reaction a quinone + NADH + 5 H(+)(in) = a quinol + NAD(+) + 4 H(+)(out). Functionally, NDH-1 shuttles electrons from NADH, via FMN and iron-sulfur (Fe-S) centers, to quinones in the respiratory chain. The immediate electron acceptor for the enzyme in this species is believed to be a menaquinone. Couples the redox reaction to proton translocation (for every two electrons transferred, four hydrogen ions are translocated across the cytoplasmic membrane), and thus conserves the redox energy in a proton gradient. The chain is NADH-quinone oxidoreductase subunit N from Rubrobacter xylanophilus (strain DSM 9941 / JCM 11954 / NBRC 16129 / PRD-1).